The following is a 150-amino-acid chain: Large ribosomal subunit protein bL9 (150 aa).

Belongs to the bacterial ribosomal protein bL9 family.

In terms of biological role, binds to the 23S rRNA. The sequence is that of Large ribosomal subunit protein bL9 from Ralstonia nicotianae (strain ATCC BAA-1114 / GMI1000) (Ralstonia solanacearum).